Reading from the N-terminus, the 844-residue chain is Receptor-like protein 49 (844 aa).

An N-terminal signal peptide occupies residues 1–31; the sequence is MMYSCRERRMITVKWSLCLIFCLSNSILVFA. The Extracellular portion of the chain corresponds to 32–803; it reads KHLCLPDQRD…QDEEKEEEEQ (772 aa). 4 N-linked (GlcNAc...) asparagine glycosylation sites follow: asparagine 59, asparagine 95, asparagine 112, and asparagine 159. LRR repeat units lie at residues 102-126, 136-160, 161-183, 185-208, 209-231, 242-265, 266-290, 292-313, 315-339, 345-362, 363-385, 386-409, 410-434, 436-457, 458-481, 482-504, 506-527, 528-551, 553-574, 575-601, 602-625, 665-689, 690-713, 714-737, and 739-762; these read QHLQ…GLKG, LKYL…LGNL, SYLT…SMGN, NYLR…LGNL, SYLA…SMGN, LNSL…NMSS, LSKL…LFMI, SLVE…NISS, SKLQ…IFSP, YLDV…VSLP, SPIE…LRNQ, TKLY…LWSL, PELQ…VIQG, GELY…LLPV, DSMN…ICEL, DNLV…CFEN, HLYV…EAIS, DRLQ…LINC, ALEF…WLEL, LPNF…SLSF, PRLR…YFAP, FTIY…ISLL, KELI…LSNL, SNLQ…LGEL, and FLAR…QIQT. A glycan (N-linked (GlcNAc...) asparagine) is linked at asparagine 207. Asparagine 262 carries N-linked (GlcNAc...) asparagine glycosylation. A glycan (N-linked (GlcNAc...) asparagine) is linked at asparagine 310. Residues asparagine 374 and asparagine 384 are each glycosylated (N-linked (GlcNAc...) asparagine). Asparagine 416 is a glycosylation site (N-linked (GlcNAc...) asparagine). Asparagine 493, asparagine 516, and asparagine 550 each carry an N-linked (GlcNAc...) asparagine glycan. Residues asparagine 696 and asparagine 712 are each glycosylated (N-linked (GlcNAc...) asparagine). A glycan (N-linked (GlcNAc...) asparagine) is linked at asparagine 744. A helical transmembrane segment spans residues 804–824; the sequence is VFSWIAAAIGYVPGVVCGLTI. Over 825 to 844 the chain is Cytoplasmic; it reads GHILVSHKRDWFMRIVSLFT.

The protein belongs to the RLP family.

Its subcellular location is the cell membrane. In Arabidopsis thaliana (Mouse-ear cress), this protein is Receptor-like protein 49.